The chain runs to 265 residues: MSLVCYESSSSGEDDDETISDNPRMLKVPKLQESFHELYKKKPKTFDSPEFHEGRIRGQKHIEGLWFVQTYLEVDLSKKVKKGIREFLNSQSRFQSLLCSEHNVPRRLHLSISENYRINYSTKNQLVHKWEQYTNNLNYRTLKFRLGKMCLLFNDEKTRMFLAFECKFSDENYKDLISHASDCMKEFTNRNLREDFLLHISFASSLTNEDEYQNWVSQDRESHFFKTMNEIINTKIQKDQFSESFIVDSLKLSIGHLIFTFPFCK.

The interval 1–22 (MSLVCYESSSSGEDDDETISDN) is disordered. Histidine 109 serves as the catalytic Proton acceptor. AMP-binding positions include 109–111 (HLS) and 195–201 (DFLLHIS). UMP is bound at residue 197–201 (LLHIS). Histidine 199 serves as the catalytic Proton donor.

Belongs to the 2H phosphoesterase superfamily. USB1 family.

It localises to the nucleus. The enzyme catalyses a 3'-end uridylyl-uridine-RNA = a 3'-end 2',3'-cyclophospho-uridine-RNA + uridine. Functionally, 3'-5' RNA exonuclease that trims the 3' end of oligo(U) tracts of the pre-U6 small nuclear RNA (snRNA) molecule, leading to the formation of a U6 snRNA 3' end-terminated with a 2',3'-cyclic phosphate.d. Participates in the U6 snRNA 3' end processing that prevents U6 snRNA degradation. The chain is U6 snRNA phosphodiesterase 1 from Schizosaccharomyces pombe (strain 972 / ATCC 24843) (Fission yeast).